The primary structure comprises 305 residues: Sulfate adenylyltransferase subunit 2 (305 aa).

It belongs to the PAPS reductase family. CysD subfamily. In terms of assembly, heterodimer composed of CysD, the smaller subunit, and CysN.

It catalyses the reaction sulfate + ATP + H(+) = adenosine 5'-phosphosulfate + diphosphate. Its pathway is sulfur metabolism; hydrogen sulfide biosynthesis; sulfite from sulfate: step 1/3. Functionally, with CysN forms the ATP sulfurylase (ATPS) that catalyzes the adenylation of sulfate producing adenosine 5'-phosphosulfate (APS) and diphosphate, the first enzymatic step in sulfur assimilation pathway. APS synthesis involves the formation of a high-energy phosphoric-sulfuric acid anhydride bond driven by GTP hydrolysis by CysN coupled to ATP hydrolysis by CysD. The chain is Sulfate adenylyltransferase subunit 2 from Pseudomonas fluorescens (strain Pf0-1).